Reading from the N-terminus, the 358-residue chain is Trace amine-associated receptor 7e (358 aa).

Over 1-47 (MATGDDSFLWDQDSILSRDLFSATSAELCYENLNRSCVRSPYSPGPR) the chain is Extracellular. N-linked (GlcNAc...) asparagine glycosylation occurs at Asn34. 2 disulfide bridges follow: Cys37–Cys201 and Cys120–Cys205. A helical transmembrane segment spans residues 48 to 68 (LILYAVFGFGAVLAVCGNLLV). At 69 to 83 (MTSILHFRQLHSPAN) the chain is on the cytoplasmic side. The helical transmembrane segment at 84-104 (FLVASLACADFLVGLTVMPFS) threads the bilayer. Topologically, residues 105 to 121 (TVRSVEGCWYFGEIYCK) are extracellular. Residues 122 to 143 (LHTCFDVSFCSSSIFHLCFISV) form a helical membrane-spanning segment. The Cytoplasmic portion of the chain corresponds to 144–166 (DRYIAVSDPLIYPTRFTASVSNK). The chain crosses the membrane as a helical span at residues 167-187 (CITFSWLLSISYGFSLIYTGA). Over 188-212 (SEAGLEDLVSALTCVGGCQLAVNQS) the chain is Extracellular. Asn210 carries an N-linked (GlcNAc...) asparagine glycan. Residues 213–233 (WVFINFLLFLIPTLVMITVYS) form a helical membrane-spanning segment. Residues 234–274 (KIFLIAKQQAQNIEKMSKQTARASDSYKDRVAKRERKAAKT) lie on the Cytoplasmic side of the membrane. The helical transmembrane segment at 275 to 295 (LGIAVAAFLLSWLPYFIDSFI) threads the bilayer. Topologically, residues 296-309 (DAFLGFITPTYVYE) are extracellular. A helical membrane pass occupies residues 310 to 333 (ILVWIAYYNSAMNPLIYAFFYPWF). The Cytoplasmic segment spans residues 334–358 (RKAIKLTVTGKILRENSSTTNLFPE).

This sequence belongs to the G-protein coupled receptor 1 family. In terms of tissue distribution, specifically expressed in neurons of the olfactory epithelium.

It is found in the cell membrane. Its function is as follows. Olfactory receptor specific for N,N-dimethylalkylamines trace amines. Trace amine compounds are enriched in animal body fluids and act on trace amine-associated receptors (TAARs) to elicit both intraspecific and interspecific innate behaviors. Ligand-binding causes a conformation change that triggers signaling via G(s)-class of G alpha proteins (GNAL or GNAS). The polypeptide is Trace amine-associated receptor 7e (Mus musculus (Mouse)).